A 534-amino-acid polypeptide reads, in one-letter code: CTP synthase (534 aa).

An amidoligase domain region spans residues 1–267 (MTKYIFVTGG…DQIVCDHLKL (267 aa)). Residue Ser13 coordinates CTP. Ser13 serves as a coordination point for UTP. 14-19 (SIGKGI) is an ATP binding site. L-glutamine is bound at residue Tyr54. Asp71 contacts ATP. Mg(2+) is bound by residues Asp71 and Glu141. CTP-binding positions include 148–150 (DIE), 188–193 (KTKPTQ), and Lys224. Residues 188-193 (KTKPTQ) and Lys224 each bind UTP. Residues 292-534 (KIALVGKYVE…FVTAAVENMK (243 aa)) enclose the Glutamine amidotransferase type-1 domain. Gly354 contributes to the L-glutamine binding site. Cys381 (nucleophile; for glutamine hydrolysis) is an active-site residue. L-glutamine is bound by residues 382–385 (LGMQ), Glu405, and Arg463. Active-site residues include His508 and Glu510.

This sequence belongs to the CTP synthase family. As to quaternary structure, homotetramer.

The enzyme catalyses UTP + L-glutamine + ATP + H2O = CTP + L-glutamate + ADP + phosphate + 2 H(+). The catalysed reaction is L-glutamine + H2O = L-glutamate + NH4(+). It catalyses the reaction UTP + NH4(+) + ATP = CTP + ADP + phosphate + 2 H(+). It functions in the pathway pyrimidine metabolism; CTP biosynthesis via de novo pathway; CTP from UDP: step 2/2. With respect to regulation, allosterically activated by GTP, when glutamine is the substrate; GTP has no effect on the reaction when ammonia is the substrate. The allosteric effector GTP functions by stabilizing the protein conformation that binds the tetrahedral intermediate(s) formed during glutamine hydrolysis. Inhibited by the product CTP, via allosteric rather than competitive inhibition. Its function is as follows. Catalyzes the ATP-dependent amination of UTP to CTP with either L-glutamine or ammonia as the source of nitrogen. Regulates intracellular CTP levels through interactions with the four ribonucleotide triphosphates. The polypeptide is CTP synthase (Streptococcus agalactiae serotype V (strain ATCC BAA-611 / 2603 V/R)).